The chain runs to 858 residues: Phospholipase D gamma 1 (858 aa).

The C2 domain maps to 27–163 (PFATSSGSLR…CSGNRIEGLF (137 aa)). Residue D225 participates in Ca(2+) binding. In terms of domain architecture, PLD phosphodiesterase 1 spans 364 to 399 (TIYTHHQKTVIVDAEAAQNRRKIVAFVGGLDLCNGR). Catalysis depends on residues H369, K371, and D376. H369 serves as a coordination point for a 1,2-diacyl-sn-glycero-3-phosphate. The Ca(2+) site is built by H405 and H437. Q565 contacts a 1,2-diacyl-sn-glycero-3-phosphate. A Phosphoserine modification is found at S680. The PLD phosphodiesterase 2 domain occupies 704–731 (FMIYVHSKGMVVDDEFVLIGSANINQRS). Catalysis depends on residues H709, K711, and D716. An a 1,2-diacyl-sn-glycero-3-phosphate-binding site is contributed by H709. E772 is a Ca(2+) binding site.

This sequence belongs to the phospholipase D family. C2-PLD subfamily. It depends on Ca(2+) as a cofactor. As to expression, highly expressed in roots and flowers, moderately in stems, leaves and seedlings and low in siliques. Not detected in seeds.

Its subcellular location is the cytoplasm. The protein localises to the membrane. It catalyses the reaction a 1,2-diacyl-sn-glycero-3-phosphocholine + H2O = a 1,2-diacyl-sn-glycero-3-phosphate + choline + H(+). Inhibited by neomycin. Up-regulated by PIP2 binding. In terms of biological role, hydrolyzes glycerol-phospholipids at the terminal phosphodiesteric bond to generate phosphatidic acids (PA). Plays an important role in various cellular processes, including phytohormone action, vesicular trafficking, secretion, cytoskeletal arrangement, meiosis, tumor promotion, pathogenesis, membrane deterioration and senescence. Can use phosphatidylserine (PS) and phosphatidylethanolamine (PE) as substrates only in the presence of PIP2. Can use phosphatidylcholine (PC), phosphatidylglycerol (PG) or N-acylphosphatidylethanolamine (NAPE) as substrates in the presence of PE and PIP2. Involved in membrane lipid modulation under aluminum (Al) stress and negatively modulate plant tolerance to Al. The sequence is that of Phospholipase D gamma 1 from Arabidopsis thaliana (Mouse-ear cress).